Reading from the N-terminus, the 272-residue chain is MNSIVSKYTQSTNNDDPKKIIEEEGFTNRFDVVPVPQSSLYLRNLTDETKNKHCLIKMNHGTTTLAFRYQHGIVVCVDSRASAGPLIASQTVKKVIEINPYLLGTLAGGAADCQFWETVLGMECRLHQLRNKELISVSAASKILSNITYSYKGYGLSMGTMLAGTGKGGTALYYIDSDGTRLKGDLFSVGSGSTFAYGVLDSGYRWDLSKQEALYLAQRSIVAATHRDAYSGGSVNLYHIDENGWVFHGNFDVDSLIWEAKDNENSFAHIPR.

Positions 1 to 61 (MNSIVSKYTQ…KHCLIKMNHG (61 aa)) are cleaved as a propeptide — removed in mature form. Thr62 (nucleophile) is an active-site residue.

It belongs to the peptidase T1B family. The 26S proteasome consists of a 20S proteasome core and two 19S regulatory subunits. The 20S proteasome core is composed of 28 subunits that are arranged in four stacked rings, resulting in a barrel-shaped structure. The two end rings are each formed by seven alpha subunits, and the two central rings are each formed by seven beta subunits. The catalytic chamber with the active sites is on the inside of the barrel.

Its subcellular location is the cytoplasm. It localises to the nucleus. It carries out the reaction Cleavage of peptide bonds with very broad specificity.. In terms of biological role, the proteasome is a multicatalytic proteinase complex which is characterized by its ability to cleave peptides with Arg, Phe, Tyr, Leu, and Glu adjacent to the leaving group at neutral or slightly basic pH. The proteasome has an ATP-dependent proteolytic activity. This is Probable proteasome subunit beta type-5 (pts1) from Schizosaccharomyces pombe (strain 972 / ATCC 24843) (Fission yeast).